We begin with the raw amino-acid sequence, 495 residues long: Protein adenylyltransferase Fic (495 aa).

The segment at 1–27 (MGTEAEQPSPPSPPAQQQEQTNPPLWN) is disordered. A helical transmembrane segment spans residues 36–55 (LYRLVLFFIAGSLAAWTIHA). TPR repeat units lie at residues 121–154 (ALVSLRMAQDMYLAGKDDKASRLFEHALALAPRH) and 155–189 (PEVLLRYGEFLEHSQRNIVLADQYYFQALTISPSN). An Inhibitory (S/T)XXXE(G/N) motif motif is present at residues 246–251 (SVGIEG). Residues Glu250 and 331 to 334 (VGGH) contribute to the ATP site. One can recognise a Fido domain in the interval 300–435 (ITIKDILELH…IRPFVRFIAD (136 aa)). His378 is a catalytic residue. Residues 382–389 (DGNGRTSR), 414–415 (YY), and Asn422 contribute to the ATP site.

This sequence belongs to the fic family. In terms of assembly, homodimer.

The protein resides in the membrane. The enzyme catalyses L-tyrosyl-[protein] + ATP = O-(5'-adenylyl)-L-tyrosyl-[protein] + diphosphate. The catalysed reaction is L-threonyl-[protein] + ATP = 3-O-(5'-adenylyl)-L-threonyl-[protein] + diphosphate. It catalyses the reaction 3-O-(5'-adenylyl)-L-threonyl-[protein] + H2O = L-threonyl-[protein] + AMP + H(+). The side chain of Glu-250 determines which of the two opposing activities (AMPylase or de-AMPylase) will take place. In response to endoplasmic reticulum stress, mediates de-AMPylase activity. Adenylyltransferase activity is inhibited by the inhibitory helix present at the N-terminus: Glu-250 binds ATP and competes with ATP-binding at Arg-389, thereby preventing adenylyltransferase activity. In unstressed cells, disengagement of Glu-250 promotes adenylyltransferase activity. Activation dissociates ATP-binding from Glu-250, allowing ordered binding of the entire ATP moiety with the alpha-phosphate in an orientation that is productive for accepting an incoming target hydroxyl side chain. Functionally, protein that can both mediate the addition of adenosine 5'-monophosphate (AMP) to specific residues of target proteins (AMPylation), and the removal of the same modification from target proteins (de-AMPylation), depending on the context. The side chain of Glu-250 determines which of the two opposing activities (AMPylase or de-AMPylase) will take place. Acts as a key regulator of the unfolded protein response (UPR) by mediating AMPylation or de-AMPylation of Hsc70-3/BiP. In unstressed cells, acts as an adenylyltransferase by mediating AMPylation of Hsc70-3/BiP at 'Thr-518', thereby inactivating it. In response to endoplasmic reticulum stress, acts as a phosphodiesterase by mediating removal of ATP (de-AMPylation) from Hsc70-3/BiP at 'Thr-518', leading to restore HSPA5/BiP activity. In Drosophila yakuba (Fruit fly), this protein is Protein adenylyltransferase Fic.